Consider the following 266-residue polypeptide: Glucagon-1 (266 aa).

Residues 1-20 (MKSTCYMIGILLMILQNTYQ) form the signal peptide. 6 consecutive propeptides follow at residues 21-50 (SPVP…LKEV), 84-95 (SGELSRRNADYE), 136-140 (NAEFE), 175-178 (IRYS), 213-224 (NFSEVHSVEEMD), and 261-266 (DLLEEQ). The span at 23–32 (VPETDANSRS) shows a compositional bias: polar residues. The disordered stretch occupies residues 23 to 44 (VPETDANSRSVKAARNEAVDDS).

The protein belongs to the glucagon family.

The protein resides in the secreted. Promotes hydrolysis of glycogen and lipids, and raises the blood sugar level. This chain is Glucagon-1 (gcg1), found in Xenopus laevis (African clawed frog).